Reading from the N-terminus, the 381-residue chain is Flap endonuclease 1 (381 aa).

Residues 1-105 (MGVKGLNQLI…GELEKRLLKR (105 aa)) are N-domain. D34 contacts Mg(2+). Residues R47 and R71 each contribute to the DNA site. Residues D87, E159, E161, D180, and D182 each coordinate Mg(2+). Residues 123–254 (EVMKFEKRLV…VTAYKLIKEH (132 aa)) are I-domain. A DNA-binding site is contributed by E159. The DNA site is built by G232 and D234. D234 serves as a coordination point for Mg(2+). The interval 340 to 348 (VQGRLDGFF) is interaction with PCNA. The disordered stretch occupies residues 354-381 (PGAKAGDKKGDKKRGSDSKASNNKKKRK). Residues 358–370 (AGDKKGDKKRGSD) show a composition bias toward basic and acidic residues.

This sequence belongs to the XPG/RAD2 endonuclease family. FEN1 subfamily. Interacts with PCNA. Three molecules of FEN1 bind to one PCNA trimer with each molecule binding to one PCNA monomer. PCNA stimulates the nuclease activity without altering cleavage specificity. It depends on Mg(2+) as a cofactor. Phosphorylated. Phosphorylation upon DNA damage induces relocalization to the nuclear plasma.

The protein localises to the nucleus. Its subcellular location is the nucleolus. The protein resides in the nucleoplasm. It is found in the mitochondrion. Its function is as follows. Structure-specific nuclease with 5'-flap endonuclease and 5'-3' exonuclease activities involved in DNA replication and repair. During DNA replication, cleaves the 5'-overhanging flap structure that is generated by displacement synthesis when DNA polymerase encounters the 5'-end of a downstream Okazaki fragment. It enters the flap from the 5'-end and then tracks to cleave the flap base, leaving a nick for ligation. Also involved in the long patch base excision repair (LP-BER) pathway, by cleaving within the apurinic/apyrimidinic (AP) site-terminated flap. Acts as a genome stabilization factor that prevents flaps from equilibrating into structures that lead to duplications and deletions. Also possesses 5'-3' exonuclease activity on nicked or gapped double-stranded DNA, and exhibits RNase H activity. Also involved in replication and repair of rDNA and in repairing mitochondrial DNA. The protein is Flap endonuclease 1 of Scheffersomyces stipitis (strain ATCC 58785 / CBS 6054 / NBRC 10063 / NRRL Y-11545) (Yeast).